We begin with the raw amino-acid sequence, 895 residues long: Histone-lysine N-methyltransferase EZ3 (895 aa).

Over residues 1–13 (MASSSKASDSSSQ) the composition is skewed to low complexity. 2 disordered regions span residues 1 to 30 (MASS…APAS) and 396 to 446 (SSVS…PGKR). Residues 396-422 (SSVSAEESTTPPSADTSETENASSDMP) are compositionally biased toward polar residues. The segment covering 427–436 (RKYKISKRGP) has biased composition (basic residues). The SANT domain maps to 528–578 (TLSCWSALERDLYLKGIEIFGKNSCLIARNLLSGMKTCMEVANYMYNNGAA). The CXC domain maps to 628-732 (AGHPTVRKRI…SLGEPPARGD (105 aa)). Residues 747-862 (QRILLGRSDV…ASEELFYDYR (116 aa)) enclose the SET domain. The segment at 870–895 (AWARRPEGSKKDEASVSHHRAHKVAR) is disordered. The span at 873–885 (RRPEGSKKDEASV) shows a compositional bias: basic and acidic residues. The span at 886-895 (SHHRAHKVAR) shows a compositional bias: basic residues.

The protein belongs to the class V-like SAM-binding methyltransferase superfamily. Histone-lysine methyltransferase family. EZ subfamily. As to expression, widely expressed.

It is found in the nucleus. It catalyses the reaction L-lysyl(27)-[histone H3] + 3 S-adenosyl-L-methionine = N(6),N(6),N(6)-trimethyl-L-lysyl(27)-[histone H3] + 3 S-adenosyl-L-homocysteine + 3 H(+). In terms of biological role, polycomb group (PcG) protein. Catalytic subunit of some PcG multiprotein complex, which methylates 'Lys-27' of histone H3, leading to transcriptional repression of the affected target genes. PcG proteins are not required to initiate repression, but to maintain it during later stages of development. The polypeptide is Histone-lysine N-methyltransferase EZ3 (EZ3) (Zea mays (Maize)).